Consider the following 142-residue polypeptide: Hemoglobin subunit alpha (142 aa).

A Globin domain is found at 1–142 (VLSAADKNNV…VSTVLTSKYR (142 aa)). A Phosphoserine modification is found at S3. 2 positions are modified to N6-succinyllysine: K7 and K11. An N6-acetyllysine; alternate modification is found at K16. N6-succinyllysine; alternate is present on K16. Y24 is subject to Phosphotyrosine. S35 is subject to Phosphoserine. Position 40 is an N6-succinyllysine (K40). An O2-binding site is contributed by H58. Residue H87 coordinates heme b. The residue at position 102 (S102) is a Phosphoserine. Residue T108 is modified to Phosphothreonine. Position 125 is a phosphoserine (S125). Residues T135 and T138 each carry the phosphothreonine modification. S139 is modified (phosphoserine).

Belongs to the globin family. Heterotetramer of two alpha chains and two beta chains. In terms of tissue distribution, red blood cells.

Functionally, involved in oxygen transport from the lung to the various peripheral tissues. In terms of biological role, hemopressin acts as an antagonist peptide of the cannabinoid receptor CNR1. Hemopressin-binding efficiently blocks cannabinoid receptor CNR1 and subsequent signaling. This Procavia capensis habessinica (Abyssinian hyrax) protein is Hemoglobin subunit alpha (HBA).